The sequence spans 679 residues: Dihydroxyacetone phosphate acyltransferase (679 aa).

Phosphoserine is present on serine 11. Residues 161-166 (HRSYID) carry the HXXXXD motif motif. Lysine 642 is subject to N6-acetyllysine.

Belongs to the GPAT/DAPAT family. Part of a heterotrimeric complex composed of GNPAT, AGPS and a modified form of GNPAT.

The protein resides in the peroxisome membrane. It carries out the reaction dihydroxyacetone phosphate + an acyl-CoA = a 1-acylglycerone 3-phosphate + CoA. The enzyme catalyses dihydroxyacetone phosphate + hexadecanoyl-CoA = 1-hexadecanoylglycerone 3-phosphate + CoA. It functions in the pathway membrane lipid metabolism; glycerophospholipid metabolism. Dihydroxyacetonephosphate acyltransferase catalyzing the first step in the biosynthesis of plasmalogens, a subset of phospholipids that differ from other glycerolipids by having an alkyl chain attached through a vinyl ether linkage at the sn-1 position of the glycerol backbone, and which unique physical properties have an impact on various aspects of cell signaling and membrane biology. This Oryctolagus cuniculus (Rabbit) protein is Dihydroxyacetone phosphate acyltransferase.